The sequence spans 486 residues: MTAPLPGMEEIEDPAVVREEMISAFEDASKDLASNTSYYDAERRPEAIGVTVPREMQQLLAHVGYPRLYVDSVAERQAVEGFRLGDADEADEELWQWWQANNLDIEAPLGYTDAYVHGRSFITISKPDPQLDLGWDQNVPIIRVEPPTRMHAEIDPRINRVSKAIRVAYDKEGNEIQAATLYTPMETIGWFRADGEWAEWFNVPHGLGVVPVVPLPNRTRLSDLYGTSEITPELRSMTDAAARILMLMQATAELMGVPQRLIFGIKPEEIGVDSETGQTLFDAYLARILAFEDAEGKIQQFSAAELANFTNALDQIAKQVAAYTGLPPQYLSTAADNPASAEAIRAAESRLIKKVERKNLMFGGAWEEAMRIAYRIMKGGDVPPDMLRMETVWRDPSTPTYAAKADAATKLYGNGQGVIPRERARIDMGYSVKEREEMRRWDEEEAAMGLGLLGTMVDADPTVPGSPSPTAPPKPQPAIESSGGDA.

The interval 456-486 (MVDADPTVPGSPSPTAPPKPQPAIESSGGDA) is disordered. Pro residues predominate over residues 464–476 (PGSPSPTAPPKPQ).

Belongs to the SPP1-like portal protein family. Homododecamer.

It localises to the virion. Functionally, forms the portal vertex of the capsid. This portal plays critical roles in head assembly, genome packaging, neck/tail attachment, and genome ejection. The portal protein multimerizes as a single ring-shaped homododecamer arranged around a central channel. Binds to the terminase subunits to form the packaging machine. In Mycobacterium phage L5 (Mycobacteriophage L5), this protein is Portal protein (14).